Here is a 340-residue protein sequence, read N- to C-terminus: Mitochondrial import receptor subunit TOM40 homolog 2 (340 aa).

The disordered stretch occupies residues 1–37; it reads MGNVMASTADAESSRGRGHLSAGLRLPEAPQYSGGVP.

This sequence belongs to the Tom40 family. In terms of assembly, forms part of the preprotein translocase of the outer mitochondrial membrane (TOM complex). Interacts with mitochondrial targeting sequences. In terms of tissue distribution, only expressed in the male germline, detected in primary spermatocytes as well as post-meiotic stages. Not detected in stem cells and spermatogonia near the tip of the testis.

The protein localises to the mitochondrion outer membrane. Its function is as follows. Channel-forming protein essential for import of protein precursors into mitochondria. This Drosophila melanogaster (Fruit fly) protein is Mitochondrial import receptor subunit TOM40 homolog 2.